The following is a 373-amino-acid chain: GTPase Obg (373 aa).

The Obg domain occupies 1–158 (MFVDSVELLI…KQVRLEMKLI (158 aa)). The interval 62–83 (NHIKAENGRPGEGRKKYGRKGQ) is disordered. Basic and acidic residues predominate over residues 64 to 76 (IKAENGRPGEGRK). One can recognise an OBG-type G domain in the interval 159-362 (ADVGLVGYPN…LRYALGDFVK (204 aa)). GTP contacts are provided by residues 165 to 172 (GYPNVGKS), 190 to 194 (FTTLT), 212 to 215 (DIPG), 280 to 283 (TKID), and 343 to 345 (SSV). Residues S172 and T192 each contribute to the Mg(2+) site.

It belongs to the TRAFAC class OBG-HflX-like GTPase superfamily. OBG GTPase family. As to quaternary structure, monomer. Mg(2+) is required as a cofactor.

Its subcellular location is the cytoplasm. Functionally, an essential GTPase which binds GTP, GDP and possibly (p)ppGpp with moderate affinity, with high nucleotide exchange rates and a fairly low GTP hydrolysis rate. Plays a role in control of the cell cycle, stress response, ribosome biogenesis and in those bacteria that undergo differentiation, in morphogenesis control. This chain is GTPase Obg, found in Sulfurovum sp. (strain NBC37-1).